We begin with the raw amino-acid sequence, 343 residues long: MTLNSLPIFLVLISGIFCQYDYGPADDYGYDPFGPSTAVCAPECNCPLSYPTAMYCDNLKLKTIPIVPSGIKYLYLRNNMIESIEENTFDNVTDLQWLILDHNHLENSKIKGRVFSKLKNLKKLHINYNNLTEAVGPLPKTLDDLQLSHNKITKVNPGALEGLVNLTVIHLQNNQLKADSISGAFKGLNSLLYLDLSFNQLTKLPTGLPHSLLMLYFDNNQISNIPDEYFQGFKTLQYLRLSHNKLTDSGIPGNVFNITSLVELDLSFNQLKSIPTVSENLENFYLQVNKINKFPLSSFCKVVGPLTYSKITHLRLDGNNLTRADLPQEMYNCLRVAAEISLE.

The signal sequence occupies residues 1–18 (MTLNSLPIFLVLISGIFC). A Pyrrolidone carboxylic acid modification is found at Gln-19. Sulfotyrosine occurs at positions 20 and 22. Positions 31–69 (DPFGPSTAVCAPECNCPLSYPTAMYCDNLKLKTIPIVPS) constitute an LRRNT domain. 8 LRR repeats span residues 70–91 (GIKYLYLRNNMIESIEENTFDN), 94–117 (DLQWLILDHNHLENSKIKGRVFSK), 120–140 (NLKKLHINYNNLTEAVGPLPK), 141–162 (TLDDLQLSHNKITKVNPGALEG), 165–186 (NLTVIHLQNNQLKADSISGAFK), 190–211 (SLLYLDLSFNQLTKLPTGLPHS), 212–232 (LLMLYFDNNQISNIPDEYFQG), and 235–255 (TLQYLRLSHNKLTDSGIPGNV). N-linked (GlcNAc...) (keratan sulfate) asparagine glycosylation is present at Asn-91. Asn-130 carries an N-linked (GlcNAc...) (keratan sulfate) asparagine glycan. Asn-165 carries an N-linked (GlcNAc...) (keratan sulfate) asparagine glycan. N-linked (GlcNAc...) (keratan sulfate) asparagine glycosylation occurs at Asn-257. LRR repeat units lie at residues 260–281 (SLVELDLSFNQLKSIPTVSENL), 282–301 (ENFYLQVNKINKFPLSSFCK), and 310–330 (KITHLRLDGNNLTRADLPQEM). A disulfide bridge connects residues Cys-300 and Cys-333. Residue Asn-320 is glycosylated (N-linked (GlcNAc...) asparagine).

This sequence belongs to the small leucine-rich proteoglycan (SLRP) family. SLRP class II subfamily. In terms of assembly, binds to laminin. In terms of processing, contains keratan sulfate.

Its subcellular location is the secreted. The protein resides in the extracellular space. The protein localises to the extracellular matrix. In Coturnix japonica (Japanese quail), this protein is Lumican (LUM).